Here is a 151-residue protein sequence, read N- to C-terminus: Transcription factor ATOH7 (151 aa).

The region spanning 39–91 (KRRLAANARERRRMQGLNTAFDRLRKVVPQWGQDKKLSKYETLQMALSYIMAL) is the bHLH domain.

The protein resides in the nucleus. Its subcellular location is the perikaryon. It localises to the cell projection. The protein localises to the axon. Functionally, transcription factor that binds to DNA at the consensus sequence 5'-CAG[GC]TG-3'. Positively regulates the determination of retinal ganglion cell fate and formation of the optic nerve and retino-hypothalamic tract. Required for retinal circadian rhythm photoentrainment. Plays a role in brainstem auditory signaling and binaural processing. During retinal neurogenesis, activates its own transcription, as well as the transcription of CHRNB3 and BRN3. In Gallus gallus (Chicken), this protein is Transcription factor ATOH7.